The primary structure comprises 238 residues: uncharacterized protein (238 aa).

The next 7 helical transmembrane spans lie at 15–37, 50–69, 79–96, 101–118, 128–150, 163–183, and 203–225; these read FGAL…VLLP, ARAG…CGTL, LPFH…LYFI, IFFN…VAVL, ILYA…FSLL, CAVL…RRLG, and FFVY…YLPF.

It localises to the cell membrane. This is an uncharacterized protein from Treponema pallidum (strain Nichols).